The sequence spans 324 residues: Cytochrome f (324 aa).

The signal sequence occupies residues 1-30 (MNMRFSPKALVRQLGRLSLVACLSLGLLGA). Residues tyrosine 42, cysteine 62, cysteine 65, and histidine 66 each coordinate heme. The helical transmembrane segment at 290 to 310 (VLGVIAFFFAVMLAQIMLVLK) threads the bilayer.

Belongs to the cytochrome f family. The 4 large subunits of the cytochrome b6-f complex are cytochrome b6, subunit IV (17 kDa polypeptide, PetD), cytochrome f and the Rieske protein, while the 4 small subunits are PetG, PetL, PetM and PetN. The complex functions as a dimer. Heme serves as cofactor.

It localises to the cellular thylakoid membrane. In terms of biological role, component of the cytochrome b6-f complex, which mediates electron transfer between photosystem II (PSII) and photosystem I (PSI), cyclic electron flow around PSI, and state transitions. In Synechococcus elongatus (strain ATCC 33912 / PCC 7942 / FACHB-805) (Anacystis nidulans R2), this protein is Cytochrome f.